We begin with the raw amino-acid sequence, 239 residues long: Phosducin-like protein 3 (239 aa).

N-acetylmethionine is present on M1. The region spanning 32–180 (EAEEEQRILQ…EGDIKAQFIG (149 aa)) is the Phosducin domain. Phosphoserine is present on S43. The interval 91-239 (FGEVLEISGK…MKRDSDSEGD (149 aa)) is thioredoxin fold. Interaction with XIAP regions lie at residues 97 to 99 (ISG) and 153 to 155 (TCI). Phosphoserine occurs at positions 234 and 236.

This sequence belongs to the phosducin family. Interacts (via thioredoxin fold region) with KDR/VEGFR2 (via juxtamembrane domain). Forms ternary complexes with the chaperonin CCT complex and actin substrate, leading to inhibition of actin folding. Interacts with XIAP (via BIR 3 and RING domain). Interacts with HSP90AA1 and HSP90AB1. N-terminal methionine acetylation destabilizes the protein. As to expression, expressed in endothelial cells (at protein level). Expressed in all tissues examined including spleen, thymus, prostate, testis, ovary, small intestine and colon.

Its subcellular location is the cytoplasm. It is found in the perinuclear region. The protein localises to the endoplasmic reticulum. In terms of biological role, acts as a chaperone for the angiogenic VEGF receptor KDR/VEGFR2, increasing its abundance by inhibiting its ubiquitination and degradation. Inhibits the folding activity of the chaperonin-containing T-complex (CCT) which leads to inhibition of cytoskeletal actin folding. Acts as a chaperone during heat shock alongside HSP90 and HSP40/70 chaperone complexes. Modulates the activation of caspases during apoptosis. This is Phosducin-like protein 3 (PDCL3) from Homo sapiens (Human).